A 72-amino-acid chain; its full sequence is Cytochrome b-c1 complex subunit 8 (72 aa).

Topologically, residues 2 to 41 (GKQPVKLKAVVYAISPFQQKIMPGLWKDLPGKIHHKVSEN) are mitochondrial matrix. Residues 42-59 (WISATLLLGPLVGTYSYV) traverse the membrane as a helical segment. Residues 60-72 (QHFLEKEKLEHRY) are Mitochondrial intermembrane-facing.

Belongs to the UQCRQ/QCR8 family. As to quaternary structure, component of the ubiquinol-cytochrome c oxidoreductase (cytochrome b-c1 complex, complex III, CIII), a multisubunit enzyme composed of 3 respiratory subunits cytochrome b, cytochrome c1 and Rieske protein, 2 core protein subunits, and additional low-molecular weight protein subunits. The complex exists as an obligatory dimer and forms supercomplexes (SCs) in the inner mitochondrial membrane with cytochrome c oxidase (complex IV, CIV).

It localises to the mitochondrion inner membrane. Its function is as follows. Component of the ubiquinol-cytochrome c oxidoreductase, a multisubunit transmembrane complex that is part of the mitochondrial electron transport chain which drives oxidative phosphorylation. The respiratory chain contains 3 multisubunit complexes succinate dehydrogenase (complex II, CII), ubiquinol-cytochrome c oxidoreductase (cytochrome b-c1 complex, complex III, CIII) and cytochrome c oxidase (complex IV, CIV), that cooperate to transfer electrons derived from NADH and succinate to molecular oxygen, creating an electrochemical gradient over the inner membrane that drives transmembrane transport and the ATP synthase. The cytochrome b-c1 complex catalyzes electron transfer from ubiquinol to cytochrome c, linking this redox reaction to translocation of protons across the mitochondrial inner membrane, with protons being carried across the membrane as hydrogens on the quinol. In the process called Q cycle, 2 protons are consumed from the matrix, 4 protons are released into the intermembrane space and 2 electrons are passed to cytochrome c. The chain is Cytochrome b-c1 complex subunit 8 from Solanum tuberosum (Potato).